Here is a 280-residue protein sequence, read N- to C-terminus: Pupal cuticle protein 36a (280 aa).

A signal peptide spans 1–15 (MKLFVLAAVLGVCLA). Positions 135–198 (AEGFAYDFET…SQGAHLPTPP (64 aa)) constitute a Chitin-binding type R&amp;R domain. Residues 258–280 (GAGRAGGTATSASEAPTTTIRLM) form a disordered region.

The sequence is that of Pupal cuticle protein 36a (PCP36a) from Manduca sexta (Tobacco hawkmoth).